Here is a 539-residue protein sequence, read N- to C-terminus: Glycerol kinase (539 aa).

Residue threonine 49 coordinates ADP. 3 residues coordinate ATP: threonine 49, threonine 50, and serine 51. Residue threonine 49 coordinates sn-glycerol 3-phosphate. Position 53 (arginine 53) interacts with ADP. Arginine 119, glutamate 120, tyrosine 171, and aspartate 280 together coordinate sn-glycerol 3-phosphate. Arginine 119, glutamate 120, tyrosine 171, aspartate 280, and glutamine 281 together coordinate glycerol. Positions 302 and 345 each coordinate ADP. The ATP site is built by threonine 302, glycine 345, glutamine 349, and glycine 446. The ADP site is built by glycine 446 and asparagine 450.

The protein belongs to the FGGY kinase family.

The enzyme catalyses glycerol + ATP = sn-glycerol 3-phosphate + ADP + H(+). Its pathway is polyol metabolism; glycerol degradation via glycerol kinase pathway; sn-glycerol 3-phosphate from glycerol: step 1/1. With respect to regulation, inhibited by fructose 1,6-bisphosphate (FBP). Functionally, key enzyme in the regulation of glycerol uptake and metabolism. Catalyzes the phosphorylation of glycerol to yield sn-glycerol 3-phosphate. The polypeptide is Glycerol kinase (Rhodopirellula baltica (strain DSM 10527 / NCIMB 13988 / SH1)).